The chain runs to 300 residues: uncharacterized protein (300 aa).

Positions methionine 1 to glutamine 11 are enriched in polar residues. The disordered stretch occupies residues methionine 1–aspartate 20. The recombinase DNA-binding region spans methionine 1–arginine 92. The stretch at serine 162 to glutamate 249 forms a coiled coil.

This is an uncharacterized protein from Bacillus subtilis (strain 168).